A 134-amino-acid polypeptide reads, in one-letter code: Protein NrdI (134 aa).

The protein belongs to the NrdI family.

Functionally, probably involved in ribonucleotide reductase function. The chain is Protein NrdI from Yersinia pseudotuberculosis serotype O:1b (strain IP 31758).